Consider the following 321-residue polypeptide: Mitochondrial coenzyme A transporter SLC25A42 (321 aa).

Solcar repeat units lie at residues 33 to 119 (RSVL…YKGI), 131 to 216 (LPPV…LKKT), and 226 to 314 (PFPY…TQIL). Transmembrane regions (helical) follow at residues 35–55 (VLNSLVSGAFAGAVAKTAVAP), 91–111 (LWRGNSATMVRVIPYAAIQFC), 137–154 (LLAGSLAGTTAAIITYPL), 191–208 (GFTPTILGVVPYAGLSFF), 232–252 (LVFGACAGLIGQSASYPLDVV), and 295–315 (VKGPIAVGISFMTFDLTQILL).

Belongs to the mitochondrial carrier (TC 2.A.29) family.

Its subcellular location is the mitochondrion inner membrane. It catalyses the reaction ADP(out) + CoA(in) = ADP(in) + CoA(out). The enzyme catalyses 3'-dephospho-CoA(in) + ADP(out) = 3'-dephospho-CoA(out) + ADP(in). The catalysed reaction is adenosine 3',5'-bisphosphate(in) + ADP(out) = adenosine 3',5'-bisphosphate(out) + ADP(in). It carries out the reaction AMP(in) + ADP(out) = AMP(out) + ADP(in). It catalyses the reaction dADP(in) + ADP(out) = dADP(out) + ADP(in). The enzyme catalyses ADP(in) + ATP(out) = ADP(out) + ATP(in). Functionally, mitochondrial carrier mediating the transport of coenzyme A (CoA) in mitochondria in exchange for intramitochondrial (deoxy)adenine nucleotides and adenosine 3',5'-diphosphate. The polypeptide is Mitochondrial coenzyme A transporter SLC25A42 (slc25a42) (Danio rerio (Zebrafish)).